A 173-amino-acid chain; its full sequence is MLDRRGSYEYEDLLACGRGELFGPGNAQLPLPPMLMFDRIVEISETGGEFGKGVVRAELDVKPDLWFFGCHFKNDPVMPGCLGLDAMWQMVGFFLGWTGGAGRGRALGLGDLKFSGQVLPTASKVVYNVDIKRVMRSKLVLGIADGWLSMDGDIIYRAKDLKVGLFKQGAAPS.

His-71 is an active-site residue.

The protein belongs to the thioester dehydratase family. FabA subfamily. As to quaternary structure, homodimer.

Its subcellular location is the cytoplasm. It catalyses the reaction a (3R)-hydroxyacyl-[ACP] = a (2E)-enoyl-[ACP] + H2O. It carries out the reaction (3R)-hydroxydecanoyl-[ACP] = (2E)-decenoyl-[ACP] + H2O. The enzyme catalyses (2E)-decenoyl-[ACP] = (3Z)-decenoyl-[ACP]. Its pathway is lipid metabolism; fatty acid biosynthesis. Necessary for the introduction of cis unsaturation into fatty acids. Catalyzes the dehydration of (3R)-3-hydroxydecanoyl-ACP to E-(2)-decenoyl-ACP and then its isomerization to Z-(3)-decenoyl-ACP. Can catalyze the dehydratase reaction for beta-hydroxyacyl-ACPs with saturated chain lengths up to 16:0, being most active on intermediate chain length. This chain is 3-hydroxydecanoyl-[acyl-carrier-protein] dehydratase, found in Bradyrhizobium sp. (strain ORS 278).